The chain runs to 418 residues: D-amino acid dehydrogenase (418 aa).

3-17 is a binding site for FAD; that stretch reads VLVLGAGVAGVSSAW.

It belongs to the DadA oxidoreductase family. FAD serves as cofactor.

The catalysed reaction is a D-alpha-amino acid + A + H2O = a 2-oxocarboxylate + AH2 + NH4(+). It functions in the pathway amino-acid degradation; D-alanine degradation; NH(3) and pyruvate from D-alanine: step 1/1. Its function is as follows. Oxidative deamination of D-amino acids. The protein is D-amino acid dehydrogenase of Neisseria meningitidis serogroup C (strain 053442).